The sequence spans 1470 residues: Membrane-associated guanylate kinase, WW and PDZ domain-containing protein 3 (1470 aa).

The PDZ 1 domain maps to 18 to 108; that stretch reads CAVSWAGPPG…PIRLKTVKPG (91 aa). The tract at residues 18–108 is interaction with ADRB1 and TGFA; it reads CAVSWAGPPG…PIRLKTVKPG (91 aa). In terms of domain architecture, Guanylate kinase-like spans 116–290; the sequence is RHYLSLQFQK…RSMDFRNYMM (175 aa). 123-130 provides a ligand contact to ATP; it reads FQKGSIDH. The disordered stretch occupies residues 184–266; that stretch reads TYDGNFYGTP…ETREMHSESS (83 aa). A compositionally biased stretch (pro residues) spans 193–204; that stretch reads PKPPAEPSPFQP. A Phosphoserine modification is found at Ser236. Over residues 238–247 the composition is skewed to acidic residues; it reads LPEEEEDEDK. 2 WW domains span residues 296 to 329 and 342 to 375; these read EPLPKNWEMAYTDTGTIYFIDHNTKTTTWLDPRL and GELPYGWEKIEDPQYGTYYVDHLNQKTQFENPVE. Residues 413–495 enclose the PDZ 2 domain; it reads RASLKKSTMG…NQYVNLTLCR (83 aa). The segment at 413–495 is interaction with PTEN; sequence RASLKKSTMG…NQYVNLTLCR (83 aa). The segment at 550–575 is disordered; that stretch reads LLSSDRLNGPSDSNEQRASLASSGSS. The span at 559 to 575 shows a compositional bias: polar residues; the sequence is PSDSNEQRASLASSGSS. The PDZ 3 domain maps to 581–657; the sequence is TIPLVKGPKG…GADVPLLILR (77 aa). The residue at position 598 (Ser598) is a Phosphoserine. The interval 665 to 700 is disordered; the sequence is KTAKMKTDTKETSGSLETINEPTPQPMPFPPSIIRS. Over residues 676 to 686 the composition is skewed to polar residues; that stretch reads TSGSLETINEP. Position 702 is a phosphoserine (Ser702). Positions 729–811 constitute a PDZ 4 domain; it reads DVFLRKQESG…NGHVLLTVRR (83 aa). The interaction with ADGRB1 stretch occupies residues 729–811; that stretch reads DVFLRKQESG…NGHVLLTVRR (83 aa). Residues 818-847 are disordered; sequence KQPEDESPQAFSQSGSPRLNRTELPTRSAP. Residues 826 to 847 are compositionally biased toward polar residues; it reads QAFSQSGSPRLNRTELPTRSAP. Residues Ser833 and Ser916 each carry the phosphoserine modification. The PDZ 5 domain occupies 852–939; sequence DVILQRKENE…TVTLTVVAEE (88 aa). Residues 852–939 are interaction with LPAR2 and GRIN2B; sequence DVILQRKENE…TVTLTVVAEE (88 aa). Positions 939 to 976 are disordered; it reads EEHHGPPSGTNSARQSPALQHRPMGQAQATHIPGDRTA. Over residues 946-956 the composition is skewed to polar residues; that stretch reads SGTNSARQSPA. Residues 1022–1104 form the PDZ 6 domain; it reads PVELERGPRG…KVLLLLRPGT (83 aa). Disordered stretches follow at residues 1124 to 1146 and 1167 to 1470; these read IYDEQPPPLPSSHSAATFEESHV and DTVQ…DKQL. Polar residues predominate over residues 1175-1191; that stretch reads TLNGSQPEMKYQSIQKN. Basic and acidic residues-rich tracts occupy residues 1193 to 1209 and 1230 to 1263; these read SKKDPSRSHGHGDKNLL and RHSEEHLEKIPRPLRSDPKGKSRDRSLSPRKGEN. The span at 1285-1304 shows a compositional bias: polar residues; it reads SSSPRKQQKIGGNSLSNTEG. Residue Ser1321 is modified to Phosphoserine. Basic and acidic residues-rich tracts occupy residues 1326 to 1340, 1350 to 1361, 1377 to 1397, and 1422 to 1431; these read PEGKEKSGVSRKDLK, RSPEKRSSKVDE, VSEKEKGRKPGTGERSRDKTG, and EVTDRGKERA.

Belongs to the MAGUK family. As to quaternary structure, interacts with ADRB1, ADGRB1, LPAR2/EDG4, FZD4, FZD7, GRIN2B, TGFA and VANGL2. Interacts with PTEN. Interacts with ADRB1, PTPRB and unidentified tyrosine phosphorylated proteins. Interacts with DLL1. Interacts with PRRG4 (via cytoplasmic domain).

The protein localises to the cell membrane. It localises to the cell junction. Its subcellular location is the tight junction. It is found in the nucleus. Its function is as follows. Acts as a scaffolding protein at cell-cell junctions, thereby regulating various cellular and signaling processes. Cooperates with PTEN to modulate the kinase activity of AKT1. Its interaction with PTPRB and tyrosine phosphorylated proteins suggests that it may link receptor tyrosine phosphatase with its substrates at the plasma membrane. In polarized epithelial cells, involved in efficient trafficking of TGFA to the cell surface. Regulates the ability of LPAR2 to activate ERK and RhoA pathways. Regulates the JNK signaling cascade via its interaction with FZD4 and VANGL2. This Rattus norvegicus (Rat) protein is Membrane-associated guanylate kinase, WW and PDZ domain-containing protein 3 (Magi3).